The primary structure comprises 336 residues: MIKKSSIKKYFKTIKDSSIKDISVDQQYPFDFKFYKPKVEGMIILFSLVILPLITVIFLNVFKTQLNITDERLGLIFQLSSILFTLVGAIIFWSRNPMSFWKSGVGILFGFPIFLQLFGLAFGLLANLVGVFNNNNNNAWSDIYNLLVQSVAEILVIIFAFSKINNLKSKVKKTFKENKKLLIPIAIAFAIVAFFVGNTLYSLIITELKLNLGESKNQEGLVSPFKVQGITKYIYMVLFIILTVFIAPLCEEIVARQALFTGVSNKVLSIIVSSLYFGILHISSGDVYNIFPYVIGGFFFSLAFSFSKGNLSYCWLSHSFYNLISVVLIIASLYIK.

This is an uncharacterized protein from Mycoplasma capricolum subsp. capricolum (strain California kid / ATCC 27343 / NCTC 10154).